The chain runs to 218 residues: 3-isopropylmalate dehydratase small subunit (218 aa).

It belongs to the LeuD family. LeuD type 1 subfamily. Heterodimer of LeuC and LeuD.

It carries out the reaction (2R,3S)-3-isopropylmalate = (2S)-2-isopropylmalate. Its pathway is amino-acid biosynthesis; L-leucine biosynthesis; L-leucine from 3-methyl-2-oxobutanoate: step 2/4. Functionally, catalyzes the isomerization between 2-isopropylmalate and 3-isopropylmalate, via the formation of 2-isopropylmaleate. This chain is 3-isopropylmalate dehydratase small subunit, found in Alkalilimnicola ehrlichii (strain ATCC BAA-1101 / DSM 17681 / MLHE-1).